A 72-amino-acid chain; its full sequence is Thiostrepton (72 aa).

The propeptide occupies 1 to 55; the sequence is MDATAIHERWSVMSNASIGQEIGVEGLTGLDVDALEISDYVDETLLDGEDLTVTM. Residues 56–67 constitute a cross-link (4-(1-hydroxyethyl)-7-isoleucino-2-(threonin-O3-ylcarbonyl)-7,8-dihydroquinolin-8-ol (Ile-Thr)); it reads IASASCTTCICT. The residue at position 58 (serine 58) is a 2,3-didehydroalanine (Ser). Residues 60–61 constitute a cross-link (thiazole-4-carboxylic acid (Ser-Cys)); sequence SC. The 5-amino-piperideine-2,5-dicarboxylic acid (Ser-Cys) (with S-69) cross-link spans 60–68; it reads SCTTCICTC. The segment at residues 60 to 69 is a cross-link (5-amino-piperideine-2,5-dicarboxylic acid (Ser-Ser) (with C-68)); it reads SCTTCICTCS. Position 63 is a (Z)-2,3-didehydrobutyrine (threonine 63). Residues 63-64 constitute a cross-link ((4S)-thiazoline-4-carboxylic acid (Thr-Cys)); sequence TC. Isoleucine 65 is subject to (3S,4R)-3,4-dihydroxyisoleucine. Positions 65–66 form a cross-link, thiazole-4-carboxylic acid (Ile-Cys); it reads IC. Positions 67-68 form a cross-link, thiazole-4-carboxylic acid (Thr-Cys); it reads TC. The segment at residues 69–70 is a cross-link (thiazole-4-carboxylic acid (Ser-Cys)); the sequence is SC. Residues serine 71 and serine 72 each carry the 2,3-didehydroalanine (Ser) modification. Serine 72 carries the post-translational modification Serine amide.

It belongs to the thiocillin family. Post-translationally, maturation of thiazole and oxazole containing antibiotics involves the enzymatic condensation of a Cys, Ser or Thr with the alpha-carbonyl of the preceding amino acid to form a thioether or ether bond, then dehydration to form a double bond with the alpha-amino nitrogen. Thiazoline or oxazoline ring are dehydrogenated to form thiazole or oxazole rings. Maturation of pyridinyl containing antibiotics involves the cross-linking of a Ser and a Cys-Ser pair usually separated by 7 or 8 residues along the peptide chain. The Ser residues are dehydrated to didehydroalanines, then bonded between their beta carbons. The alpha carbonyl of the Cys condenses with alpha carbon of the first Ser to form a pyridinyl ring. The ring may be multiply dehydrogenated to form a pyridine ring with loss of the amino nitrogen of the first Ser. In terms of processing, the amidation of Ser-72 probably does not occur by the same mechanism, oxidative cleavage of glycine, as in eukaryotes. Post-translationally, the structure of the 2,3-didehydrobutyrin is shown to be Z-isomer.

The protein localises to the secreted. Its function is as follows. Has bacteriocidal activity. Inhibits bacterial protein biosynthesis by acting on the elongation factor Tu (EF-Tu). The sequence is that of Thiostrepton (tpdA) from Streptomyces azureus.